Here is a 356-residue protein sequence, read N- to C-terminus: Fructose-1,6-bisphosphatase class 1 (356 aa).

The interval 1 to 26 (MAREWPMTHPSNHPMDHHHQTLQAHL) is disordered. Mg(2+) contacts are provided by glutamate 101, aspartate 120, leucine 122, and aspartate 123. Substrate is bound by residues 123–126 (DGSS) and asparagine 211. A Mg(2+)-binding site is contributed by glutamate 283.

The protein belongs to the FBPase class 1 family. In terms of assembly, homotetramer. Requires Mg(2+) as cofactor.

The protein localises to the cytoplasm. It carries out the reaction beta-D-fructose 1,6-bisphosphate + H2O = beta-D-fructose 6-phosphate + phosphate. Its pathway is carbohydrate biosynthesis; Calvin cycle. In Bradyrhizobium sp. (strain ORS 278), this protein is Fructose-1,6-bisphosphatase class 1.